Reading from the N-terminus, the 342-residue chain is Ribosomal RNA small subunit methyltransferase C (342 aa).

Belongs to the methyltransferase superfamily. RsmC family. Monomer.

Its subcellular location is the cytoplasm. It carries out the reaction guanosine(1207) in 16S rRNA + S-adenosyl-L-methionine = N(2)-methylguanosine(1207) in 16S rRNA + S-adenosyl-L-homocysteine + H(+). Its function is as follows. Specifically methylates the guanine in position 1207 of 16S rRNA in the 30S particle. The polypeptide is Ribosomal RNA small subunit methyltransferase C (Salmonella paratyphi A (strain ATCC 9150 / SARB42)).